The following is a 295-amino-acid chain: MVLPSMNKSVEAISNNHLQQPNKFPLINGLADVRDYYVANCLLFKLNKGSLRIENEFGEFIERSAPCLFLLEKDQTITLSMSEIEGHIDFSSLEVSYDLMQKFYKVFYSTRNYNDRELSLKTKPKYFFHADLLPGMSDTFDSILHGVACPRVCSNVSIDDHDYSYFSLMYLISAFVRKPGGFDFLERAIKITTKEKVYNIIISDLTRKWSQAEVAGKLFMSVSSLKRKLAAEEVSFSKIYLDARMNQAIKLLRMGAGNISQVATMCGYDTPSYFIAIFKRHFKITPLSFMRTMNH.

Residues 195-292 (EKVYNIIISD…KITPLSFMRT (98 aa)) form the HTH araC/xylS-type domain. 2 consecutive DNA-binding regions (H-T-H motif) follow at residues 212 to 233 (AEVA…AAEE) and 259 to 282 (ISQV…KRHF).

Functionally, positive regulator of the expression of the invasion-associated type III secretion system encoded within SPI-1 (pathogenicity island 1). This chain is Transcriptional regulator SirC (sirC), found in Salmonella typhimurium (strain SL1344).